We begin with the raw amino-acid sequence, 304 residues long: Porphobilinogen deaminase (304 aa).

C240 carries the post-translational modification S-(dipyrrolylmethanemethyl)cysteine.

It belongs to the HMBS family. As to quaternary structure, monomer. Requires dipyrromethane as cofactor.

The enzyme catalyses 4 porphobilinogen + H2O = hydroxymethylbilane + 4 NH4(+). It participates in porphyrin-containing compound metabolism; protoporphyrin-IX biosynthesis; coproporphyrinogen-III from 5-aminolevulinate: step 2/4. Its function is as follows. Tetrapolymerization of the monopyrrole PBG into the hydroxymethylbilane pre-uroporphyrinogen in several discrete steps. The polypeptide is Porphobilinogen deaminase (Xanthomonas oryzae pv. oryzae (strain KACC10331 / KXO85)).